Here is a 59-residue protein sequence, read N- to C-terminus: Putative potassium channel toxin Ts22 (59 aa).

Residues 1-22 (MKAFYGILIIFILISMIDLSQQ) form the signal peptide. 3 disulfides stabilise this stretch: Cys-29–Cys-50, Cys-35–Cys-55, and Cys-39–Cys-57.

This sequence belongs to the short scorpion toxin superfamily. Potassium channel inhibitor family. Alpha-KTx 04 subfamily. Expressed by the venom gland.

Its subcellular location is the secreted. Potently blocks voltage-gated potassium channels (Kv). This chain is Putative potassium channel toxin Ts22, found in Tityus serrulatus (Brazilian scorpion).